A 273-amino-acid polypeptide reads, in one-letter code: 4-hydroxy-tetrahydrodipicolinate reductase (273 aa).

Residues 12–17 (GAGGRM) and E38 each bind NAD(+). NADP(+) is bound at residue R39. Residues 102–104 (GTT) and 126–129 (AANF) each bind NAD(+). The active-site Proton donor/acceptor is the H159. Position 160 (H160) interacts with (S)-2,3,4,5-tetrahydrodipicolinate. The active-site Proton donor is the K163. A (S)-2,3,4,5-tetrahydrodipicolinate-binding site is contributed by 169–170 (GT).

This sequence belongs to the DapB family. Homotetramer.

It localises to the cytoplasm. It carries out the reaction (S)-2,3,4,5-tetrahydrodipicolinate + NAD(+) + H2O = (2S,4S)-4-hydroxy-2,3,4,5-tetrahydrodipicolinate + NADH + H(+). The enzyme catalyses (S)-2,3,4,5-tetrahydrodipicolinate + NADP(+) + H2O = (2S,4S)-4-hydroxy-2,3,4,5-tetrahydrodipicolinate + NADPH + H(+). It functions in the pathway amino-acid biosynthesis; L-lysine biosynthesis via DAP pathway; (S)-tetrahydrodipicolinate from L-aspartate: step 4/4. In terms of biological role, catalyzes the conversion of 4-hydroxy-tetrahydrodipicolinate (HTPA) to tetrahydrodipicolinate. The chain is 4-hydroxy-tetrahydrodipicolinate reductase from Klebsiella pneumoniae (strain 342).